The sequence spans 130 residues: Small ribosomal subunit protein uS9 (130 aa).

The protein belongs to the universal ribosomal protein uS9 family.

The polypeptide is Small ribosomal subunit protein uS9 (Bacillus anthracis (strain A0248)).